Reading from the N-terminus, the 321-residue chain is Biotin synthase (321 aa).

The Radical SAM core domain occupies 44 to 273 (FCGNVFDLCT…DGFVRIAAGR (230 aa)). 3 residues coordinate [4Fe-4S] cluster: cysteine 62, cysteine 66, and cysteine 69. 4 residues coordinate [2Fe-2S] cluster: serine 106, cysteine 138, cysteine 198, and arginine 268.

The protein belongs to the radical SAM superfamily. Biotin synthase family. Homodimer. [4Fe-4S] cluster is required as a cofactor. The cofactor is [2Fe-2S] cluster.

The enzyme catalyses (4R,5S)-dethiobiotin + (sulfur carrier)-SH + 2 reduced [2Fe-2S]-[ferredoxin] + 2 S-adenosyl-L-methionine = (sulfur carrier)-H + biotin + 2 5'-deoxyadenosine + 2 L-methionine + 2 oxidized [2Fe-2S]-[ferredoxin]. It functions in the pathway cofactor biosynthesis; biotin biosynthesis; biotin from 7,8-diaminononanoate: step 2/2. In terms of biological role, catalyzes the conversion of dethiobiotin (DTB) to biotin by the insertion of a sulfur atom into dethiobiotin via a radical-based mechanism. This is Biotin synthase from Akkermansia muciniphila (strain ATCC BAA-835 / DSM 22959 / JCM 33894 / BCRC 81048 / CCUG 64013 / CIP 107961 / Muc).